We begin with the raw amino-acid sequence, 756 residues long: Protein psiP (756 aa).

An N-terminal signal peptide occupies residues Met1–Gly23. Residues Gln24–Thr692 are Extracellular-facing. Asn82 carries N-linked (GlcNAc...) asparagine glycosylation. One can recognise a PA14 domain in the interval Leu126–Asp281. 4 N-linked (GlcNAc...) asparagine glycosylation sites follow: Asn359, Asn483, Asn564, and Asn663. Residues Ala693–Gly713 form a helical membrane-spanning segment. Residues Lys714–Asn756 lie on the Cytoplasmic side of the membrane. Residues Ser730–Arg744 show a composition bias toward polar residues. The interval Ser730 to Asn756 is disordered.

This sequence belongs to the prespore-cell-inducing factor family.

It is found in the membrane. The chain is Protein psiP (psiP) from Dictyostelium discoideum (Social amoeba).